Here is a 477-residue protein sequence, read N- to C-terminus: ATP synthase subunit beta (477 aa).

163–170 (GGAGVGKT) contacts ATP.

It belongs to the ATPase alpha/beta chains family. As to quaternary structure, F-type ATPases have 2 components, CF(1) - the catalytic core - and CF(0) - the membrane proton channel. CF(1) has five subunits: alpha(3), beta(3), gamma(1), delta(1), epsilon(1). CF(0) has four main subunits: a(1), b(1), b'(1) and c(9-12).

The protein localises to the cellular thylakoid membrane. It catalyses the reaction ATP + H2O + 4 H(+)(in) = ADP + phosphate + 5 H(+)(out). Produces ATP from ADP in the presence of a proton gradient across the membrane. The catalytic sites are hosted primarily by the beta subunits. This is ATP synthase subunit beta from Synechococcus sp. (strain JA-3-3Ab) (Cyanobacteria bacterium Yellowstone A-Prime).